The chain runs to 543 residues: Terpineol synthase, chloroplastic (543 aa).

The tract at residues methionine 1–arginine 22 is disordered. (2E)-geranyl diphosphate-binding residues include arginine 263, aspartate 300, aspartate 304, arginine 435, and asparagine 438. 2 residues coordinate Mg(2+): aspartate 300 and aspartate 304. Positions aspartate 300–aspartate 304 match the DDXXD motif motif. 3 residues coordinate Mg(2+): asparagine 438, threonine 442, and glutamate 446.

It belongs to the terpene synthase family. Tpsb subfamily. As to quaternary structure, monomer. The cofactor is Mg(2+). Requires Mn(2+) as cofactor. Confined to flowers.

The protein resides in the plastid. It is found in the chloroplast. The catalysed reaction is (2E)-geranyl diphosphate + H2O = (S)-alpha-terpineol + diphosphate. It catalyses the reaction (2E)-geranyl diphosphate = sabinene + diphosphate. It carries out the reaction (2E)-geranyl diphosphate = beta-myrcene + diphosphate. The enzyme catalyses (2E)-geranyl diphosphate = limonene + diphosphate. The catalysed reaction is (2E)-geranyl diphosphate + H2O = 1,8-cineole + diphosphate. It participates in secondary metabolite biosynthesis; terpenoid biosynthesis. Functionally, monoterpene synthase (TPS) involved in the biosynthesis of monoterpene natural products of the 'cineole cassette', volatile compounds present in floral scent. Catalyzes the conversion of (2E)-geranyl diphosphate (GPP) into alpha-terpineol and, as minor products, sabinene, beta-myrcene, limonene and 1,8-cineole. In Nicotiana alata (Winged tobacco), this protein is Terpineol synthase, chloroplastic.